Here is a 446-residue protein sequence, read N- to C-terminus: Tubulin alpha-1B chain (446 aa).

Gln-11 provides a ligand contact to GTP. The interval 34–55 (GRLMDDSPSKHDSGSTFFSETG) is disordered. Residues 35–46 (RLMDDSPSKHDS) show a composition bias toward basic and acidic residues. GTP-binding residues include Glu-69, Ser-138, Gly-142, Thr-143, Ser-177, Asn-204, and Asn-226. Residue Glu-69 participates in Mg(2+) binding. The active site involves Glu-252.

The protein belongs to the tubulin family. Dimer of alpha and beta chains. A typical microtubule is a hollow water-filled tube with an outer diameter of 25 nm and an inner diameter of 15 nM. Alpha-beta heterodimers associate head-to-tail to form protofilaments running lengthwise along the microtubule wall with the beta-tubulin subunit facing the microtubule plus end conferring a structural polarity. Microtubules usually have 13 protofilaments but different protofilament numbers can be found in some organisms and specialized cells. The cofactor is Mg(2+).

It localises to the cytoplasm. The protein resides in the cytoskeleton. The catalysed reaction is GTP + H2O = GDP + phosphate + H(+). Its function is as follows. Tubulin is the major constituent of microtubules, a cylinder consisting of laterally associated linear protofilaments composed of alpha- and beta-tubulin heterodimers. Microtubules grow by the addition of GTP-tubulin dimers to the microtubule end, where a stabilizing cap forms. Below the cap, tubulin dimers are in GDP-bound state, owing to GTPase activity of alpha-tubulin. The protein is Tubulin alpha-1B chain (TUB-1B) of Schizophyllum commune (Split gill fungus).